The following is a 283-amino-acid chain: SNF1-related protein kinase regulatory subunit beta-1 (283 aa).

Basic and acidic residues predominate over residues 1 to 10; it reads MGNANGKDED. Residues 1–63 form a disordered region; the sequence is MGNANGKDED…PARSPSPFLF (63 aa). Gly2 carries the N-myristoyl glycine lipid modification. The span at 43–60 shows a compositional bias: low complexity; that stretch reads SDSMSSSPPGSPARSPSP. Positions 101–178 are kinase-interacting sequence (KIS); it reads PTIITWNQGG…VGNVCNILDV (78 aa). The association with SNF1 complex (ASC) stretch occupies residues 215-283; the sequence is EPLAVPPQLH…TVVLYKPLTR (69 aa).

This sequence belongs to the 5'-AMP-activated protein kinase beta subunit family. In terms of assembly, subunit of a probable heterotrimeric complex consisting of an alpha catalytic (KIN10 or KIN11) subunit, and a beta (KINB) and a gamma (KING or SNF4) non-catalytic regulatory subunits. Interacts with SNF4 and CBL1. Interacts with FLZ1, FLZ2, FLZ8, FLZ9, FLZ10, FLZ12, FLZ13, FLZ14 and FLZ15. In terms of processing, sumoylated by SIZ1. As to expression, expressed in vegetative organs and, to lower extent, in reproductive organs.

Its subcellular location is the cell membrane. Regulatory subunit of the probable trimeric SNF1-related protein kinase (SnRK) complex, which may play a role in a signal transduction cascade regulating gene expression and carbohydrate metabolism in higher plants. The SnRK complex may also be involved in the regulation of fatty acid synthesis by phosphorylation of acetyl-CoA carboxylase and in assimilation of nitrogen by phosphorylating nitrate reductase. The chain is SNF1-related protein kinase regulatory subunit beta-1 (KINB1) from Arabidopsis thaliana (Mouse-ear cress).